A 710-amino-acid chain; its full sequence is Probable inactive DNA (cytosine-5)-methyltransferase DRM3 (710 aa).

Residues 1–21 (MADMRRRNGSGGSSNHERNEQ) form a disordered region. In terms of domain architecture, UBA 1 spans 52–92 (SGSNVKSLLIEMGFCPTLVQKAIDENGQDDFELLLEILTKS). Positions 167–184 (ESEDSLDGAEINEEDEDV) are enriched in acidic residues. The tract at residues 167–192 (ESEDSLDGAEINEEDEDVTPVTARGP) is disordered. The UBA 2 domain maps to 198–242 (QLFETMDKTLRLLEMGFSNDEISMAIEKIGTKGQISVLAESIVTG). The interval 282-360 (AQKEDGGGGS…MGDSSSFMET (79 aa)) is disordered. Positions 339 to 350 (YDDRGKRLRPED) are enriched in basic and acidic residues. Residues 379–710 (QPRLSQSLGP…RVTKRVRDMM (332 aa)) form the SAM-dependent MTase DRM-type domain.

It belongs to the class I-like SAM-binding methyltransferase superfamily. DRM-methyltransferase family. In terms of assembly, interacts with Pol V.

The protein resides in the nucleus. Its function is as follows. Catalytically inactive DNA methyltransferase that acts as regulatory factor for DRM2-mediated DNA methylation. Required for maintenance of non-CpG DNA methylation. Required for normal establishment and maintenance of RNA-directed DNA methylation (RdDM) and accumulation of specific repeat-associated small interfering RNAs (siRNAs). Required for nucleolus organizer region (NOR) nuclear organization during interphase. Acts downstream of the production of siRNAs. May promote RNA polymerase V (Pol V) transcriptional elongation or assist in the stabilization of Pol V transcripts. The sequence is that of Probable inactive DNA (cytosine-5)-methyltransferase DRM3 from Arabidopsis thaliana (Mouse-ear cress).